We begin with the raw amino-acid sequence, 781 residues long: Probable beta-D-xylosidase 5 (781 aa).

Residues 1-23 (MSIRRFVRLSLLIIALVSSLCES) form the signal peptide. Residues N43, N103, and N123 are each glycosylated (N-linked (GlcNAc...) asparagine). D291 is a catalytic residue. N-linked (GlcNAc...) asparagine glycosylation is found at N342, N424, N504, N543, N601, and N653.

This sequence belongs to the glycosyl hydrolase 3 family.

The protein localises to the secreted. Its subcellular location is the extracellular space. It localises to the extracellular matrix. This chain is Probable beta-D-xylosidase 5 (BXL5), found in Arabidopsis thaliana (Mouse-ear cress).